Reading from the N-terminus, the 463-residue chain is Heterogeneous nuclear ribonucleoprotein K (463 aa).

Met1 bears the N-acetylmethionine mark. Residues 1–37 (METEQPEETFPNTETNGEFGKRPAEDMEEEQAFKRSR) are disordered. Positions 1-276 (METEQPEETF…GRGGRPMPPS (276 aa)) are necessary for interaction with DDX1. A compositionally biased stretch (basic and acidic residues) spans 19–37 (FGKRPAEDMEEEQAFKRSR). Lys34 is subject to N6-acetyllysine; alternate. Lys34 participates in a covalent cross-link: Glycyl lysine isopeptide (Lys-Gly) (interchain with G-Cter in SUMO1); alternate. A Glycyl lysine isopeptide (Lys-Gly) (interchain with G-Cter in SUMO2); alternate cross-link involves residue Lys34. Phosphoserine is present on Ser36. Residue Thr39 is modified to Phosphothreonine. In terms of domain architecture, KH 1 spans 42–104 (MVELRILLQS…ETIGEILKKI (63 aa)). Glycyl lysine isopeptide (Lys-Gly) (interchain with G-Cter in SUMO2) cross-links involve residues Lys52 and Lys60. 2 consecutive repeat copies span residues 54-76 (AGAV…NASV) and 59-62 (GKGG). Residues 54 to 421 (AGAVIGKGGK…QIRHESGASI (368 aa)) form a 2 X 22 AA approximate repeats region. A 5 X 4 AA repeats of G-X-G-G region spans residues 59–407 (GKGGKNIKAL…LAGSIIGKGG (349 aa)). Phosphoserine occurs at positions 75 and 116. One can recognise a KH 2 domain in the interval 144–209 (DCELRLLIHQ…DRVVECIKII (66 aa)). Lys163 participates in a covalent cross-link: Glycyl lysine isopeptide (Lys-Gly) (interchain with G-Cter in SUMO1); alternate. Lys163 is covalently cross-linked (Glycyl lysine isopeptide (Lys-Gly) (interchain with G-Cter in SUMO2); alternate). At Lys198 the chain carries N6-acetyllysine. The segment at 209–337 (ILDLISESPI…RPGDRYDGMV (129 aa)) is interaction with ZIK1. A phosphoserine mark is found at Ser214 and Ser216. Lys219 participates in a covalent cross-link: Glycyl lysine isopeptide (Lys-Gly) (interchain with G-Cter in SUMO2); alternate. Lys219 carries the N6-succinyllysine; alternate modification. Residues 236-273 (YGGFTMMFDDRRGRPVGFPMRGRGGFDRMPPGRGGRPM) form an RNA-binding RGG-box region. Repeat copies occupy residues 245–250 (DRRGRP), 257–260 (GRGG), and 267–270 (GRGG). The 2 X 6 AA repeats of D-R-R-G-R-P stretch occupies residues 245–329 (DRRGRPVGFP…LMAYDRRGRP (85 aa)). The tract at residues 250–329 (PVGFPMRGRG…LMAYDRRGRP (80 aa)) is disordered. Over residues 252–266 (GFPMRGRGGFDRMPP) the composition is skewed to low complexity. A compositionally biased stretch (basic and acidic residues) spans 276-285 (SRRDYDDMSP). Position 284 is a phosphoserine (Ser284). The stretch at 295 to 298 (GRGG) is one 3-4 repeat. Arg316 carries the omega-N-methylarginine modification. Residues 324–329 (DRRGRP) form a 2-2 repeat. Arg377 carries the post-translational modification Omega-N-methylarginine. Residue Ser379 is modified to Phosphoserine. A Phosphotyrosine modification is found at Tyr380. Residues 387-451 (IITTQVTIPK…DQIQNAQYLL (65 aa)) form the KH 3 domain. Tandem repeats lie at residues 399-421 (AGSI…GASI) and 404-407 (GKGG). Residue Lys405 is modified to N6-acetyllysine; alternate. Lys405 is covalently cross-linked (Glycyl lysine isopeptide (Lys-Gly) (interchain with G-Cter in SUMO2); alternate). Phosphoserine is present on Ser420. Lys422 participates in a covalent cross-link: Glycyl lysine isopeptide (Lys-Gly) (interchain with G-Cter in SUMO1); alternate. A Glycyl lysine isopeptide (Lys-Gly) (interchain with G-Cter in SUMO2); alternate cross-link involves residue Lys422. Lys422 participates in a covalent cross-link: Glycyl lysine isopeptide (Lys-Gly) (interchain with G-Cter in SUMO); alternate.

As to quaternary structure, identified in the spliceosome C complex. Interacts with ANKRD28, RBM42 and ZIK1. Interacts with DDX1. Interacts with MDM2; this interaction leads to ubiquitination and proteasomal degradation. Interacts with p53/TP53. Interacts with BRDT. Interacts with IVNS1ABP. Interacts with PPIA/CYPA. Part of a transcription inhibitory ribonucleoprotein complex composed at least of the circular RNA circZNF827, ZNF827 and HNRNPL. Post-translationally, sumoylated by CBX4. Sumoylation is increased upon DNA damage, such as that produced by doxorubicin, etoposide, UV light and camptothecin, due to enhanced CBX4 phosphorylation by HIPK2 under these conditions. Ubiquitinated by MDM2. Doxorubicin treatment does not affect monoubiquitination, but slightly decreases HNRNPK poly-ubiquitination. In terms of processing, O-glycosylated (O-GlcNAcylated), in a cell cycle-dependent manner.

The protein resides in the cytoplasm. Its subcellular location is the nucleus. The protein localises to the nucleoplasm. It is found in the cell projection. It localises to the podosome. One of the major pre-mRNA-binding proteins. Binds tenaciously to poly(C) sequences. Likely to play a role in the nuclear metabolism of hnRNAs, particularly for pre-mRNAs that contain cytidine-rich sequences. Can also bind poly(C) single-stranded DNA. Plays an important role in p53/TP53 response to DNA damage, acting at the level of both transcription activation and repression. When sumoylated, acts as a transcriptional coactivator of p53/TP53, playing a role in p21/CDKN1A and 14-3-3 sigma/SFN induction. As far as transcription repression is concerned, acts by interacting with long intergenic RNA p21 (lincRNA-p21), a non-coding RNA induced by p53/TP53. This interaction is necessary for the induction of apoptosis, but not cell cycle arrest. As part of a ribonucleoprotein complex composed at least of ZNF827, HNRNPL and the circular RNA circZNF827 that nucleates the complex on chromatin, may negatively regulate the transcription of genes involved in neuronal differentiation. This chain is Heterogeneous nuclear ribonucleoprotein K (HNRNPK), found in Oryctolagus cuniculus (Rabbit).